Consider the following 637-residue polypeptide: uncharacterized protein (637 aa).

A DNA-binding region (zn(2)-C6 fungal-type) is located at residues 7–34; that stretch reads CDLCRLKKIKCSRGQPRCQTCTLFQADC. The C2H2-type; degenerate zinc-finger motif lies at 304–327; sequence SLCRTLCGQACLMAQQLNLHRKQS.

The protein resides in the nucleus. This is an uncharacterized protein from Schizosaccharomyces pombe (strain 972 / ATCC 24843) (Fission yeast).